Consider the following 137-residue polypeptide: Fluoride-specific ion channel FluC 4 (137 aa).

Transmembrane regions (helical) follow at residues 20–40, 43–63, 83–103, and 110–130; these read AAIG…ILGA, LWGT…FATL, GLCG…LLVL, and ALAY…LGLI. Na(+) contacts are provided by glycine 86 and threonine 89.

It belongs to the fluoride channel Fluc/FEX (TC 1.A.43) family.

It localises to the cell inner membrane. The catalysed reaction is fluoride(in) = fluoride(out). Na(+) is not transported, but it plays an essential structural role and its presence is essential for fluoride channel function. Its function is as follows. Fluoride-specific ion channel. Important for reducing fluoride concentration in the cell, thus reducing its toxicity. The polypeptide is Fluoride-specific ion channel FluC 4 (Brucella suis biovar 1 (strain 1330)).